A 402-amino-acid polypeptide reads, in one-letter code: Formate-dependent phosphoribosylglycinamide formyltransferase (402 aa).

Residues E22–L23 and E82 each bind N(1)-(5-phospho-beta-D-ribosyl)glycinamide. ATP-binding positions include R115, K160, S165 to Q170, E200 to V203, and E208. One can recognise an ATP-grasp domain in the interval R120 to L318. Residues E277 and E289 each coordinate Mg(2+). Residues D296, K365, and R372–R373 contribute to the N(1)-(5-phospho-beta-D-ribosyl)glycinamide site.

It belongs to the PurK/PurT family. As to quaternary structure, homodimer.

The enzyme catalyses N(1)-(5-phospho-beta-D-ribosyl)glycinamide + formate + ATP = N(2)-formyl-N(1)-(5-phospho-beta-D-ribosyl)glycinamide + ADP + phosphate + H(+). It functions in the pathway purine metabolism; IMP biosynthesis via de novo pathway; N(2)-formyl-N(1)-(5-phospho-D-ribosyl)glycinamide from N(1)-(5-phospho-D-ribosyl)glycinamide (formate route): step 1/1. In terms of biological role, involved in the de novo purine biosynthesis. Catalyzes the transfer of formate to 5-phospho-ribosyl-glycinamide (GAR), producing 5-phospho-ribosyl-N-formylglycinamide (FGAR). Formate is provided by PurU via hydrolysis of 10-formyl-tetrahydrofolate. The protein is Formate-dependent phosphoribosylglycinamide formyltransferase of Mycobacteroides abscessus (strain ATCC 19977 / DSM 44196 / CCUG 20993 / CIP 104536 / JCM 13569 / NCTC 13031 / TMC 1543 / L948) (Mycobacterium abscessus).